We begin with the raw amino-acid sequence, 120 residues long: Large ribosomal subunit protein bL17 (120 aa).

Belongs to the bacterial ribosomal protein bL17 family. As to quaternary structure, part of the 50S ribosomal subunit. Contacts protein L32.

In Geobacillus thermodenitrificans (strain NG80-2), this protein is Large ribosomal subunit protein bL17.